The following is a 1615-amino-acid chain: Low-density lipoprotein receptor-related protein 5 (1615 aa).

An N-terminal signal peptide occupies residues 1–31; that stretch reads MEAAPPGPPWPLLLLLLLLLALCGCPAPAAA. Positions 32–288 are beta-propeller 1; that stretch reads SPLLLFANRR…YSPMDIQVLS (257 aa). Over 32 to 1384 the chain is Extracellular; it reads SPLLLFANRR…PPSDDSPAHS (1353 aa). LDL-receptor class B repeat units lie at residues 75–119, 120–162, 163–206, 207–247, and 248–290; these read GAVY…DWVG, KKLY…DPAH, GYMY…DLEE, QKLY…TLSG, and DTLY…LSQE. Residues 78–81 form a YWTD 1 repeat; the sequence is YWTD. The N-linked (GlcNAc...) asparagine glycan is linked to N93. One copy of the YWTD 2 repeat lies at 123–126; sequence YWTD. N138 carries N-linked (GlcNAc...) asparagine glycosylation. The stretch at 166–169 is one YWTD 3 repeat; it reads YWTD. Residues 251 to 254 form a YWTD 4 repeat; it reads YWTD. Residues 295–337 form the EGF-like 1 domain; it reads FHTRCEEDNGGCSHLCLLSPSEPFYTCACPTGVQLQDNGRTCK. 3 disulfides stabilise this stretch: C299-C310, C306-C321, and C323-C336. Positions 341–602 are beta-propeller 2; sequence EEVLLLARRT…AVNVAKVVGT (262 aa). LDL-receptor class B repeat units follow at residues 385–427, 428–470, 471–514, 515–557, and 558–600; these read GYVY…DWVA, RNLY…HPVM, GLMY…DLQE, GKLY…LGDF, and IYWT…AKVV. 2 YWTD repeats span residues 388–391 and 431–434; these read YWTD. The N-linked (GlcNAc...) asparagine glycan is linked to N446. The stretch at 474 to 477 is one YWTD 7 repeat; it reads YWTD. Residue N499 is glycosylated (N-linked (GlcNAc...) asparagine). Residues 559 to 562 form a YWTD 8 repeat; it reads YWTD. The region spanning 601 to 641 is the EGF-like 2 domain; the sequence is GTNPCADRNGGCSHLCFFTPHATRCGCPIGLELLSDMKTCI. Cystine bridges form between C605–C616, C612–C625, and C627–C640. Residues 644–903 are beta-propeller 3; that stretch reads EAFLVFTSRA…VFHSSRQDGL (260 aa). LDL-receptor class B repeat units follow at residues 687–729, 730–772, 773–815, 816–855, and 856–898; these read NHIY…DWMG, KNLY…DPTK, GYIY…DYAD, QRLY…TQYS, and DYIY…FHSS. Residues 690–693 form a YWTD 9 repeat; it reads YWTD. An N-linked (GlcNAc...) asparagine glycan is attached at N705. 2 YWTD repeats span residues 819–822 and 859–862; these read YWTD. A glycan (N-linked (GlcNAc...) asparagine) is linked at N878. One can recognise an EGF-like 3 domain in the interval 902-942; that stretch reads GLNDCMHNNGQCGQLCLAIPGGHRCGCASHYTLDPSSRNCS. 3 disulfide bridges follow: C906-C917, C913-C926, and C928-C941. A beta-propeller 4 region spans residues 945–1212; sequence TTFLLFSQKS…AVEEVSLEEF (268 aa). LDL-receptor class B repeat units lie at residues 989-1035, 1036-1078, 1079-1123, 1124-1164, and 1165-1207; these read KFIY…DIYS, RTLF…NAER, GYLY…DNTL, GKLF…TILG, and KHLY…VEEV. The 42-residue stretch at 1213 to 1254 folds into the EGF-like 4 domain; that stretch reads SAHPCARDNGGCSHICIAKGDGTPRCSCPVHLVLLQNLLTCG. Intrachain disulfides connect C1217–C1228, C1224–C1238, C1240–C1253, C1259–C1273, C1266–C1286, C1280–C1295, C1298–C1310, C1305–C1323, C1317–C1332, C1336–C1348, C1343–C1361, and C1355–C1370. 3 LDL-receptor class A domains span residues 1258-1296, 1297-1333, and 1335-1371; these read TCSP…EGCP, VCSA…ADCD, and ICLP…LMCE. A helical membrane pass occupies residues 1385–1407; sequence SAIGPVIGIILSLFVMGGVYFVC. Residues 1408-1615 lie on the Cytoplasmic side of the membrane; sequence QRVVCQRYAG…PPPSPCTDSS (208 aa). A disordered region spans residues 1475 to 1501; the sequence is RNHVTGASSSSSSSTKATLYPPILNPP. A PPPSP motif A motif is present at residues 1500–1506; that stretch reads PPPSPAT. Positions 1538 to 1545 match the PPPSP motif B motif; sequence PPTTPCST. The tract at residues 1568–1615 is disordered; it reads SDSDPYPPPPTPHSQYLSAEDSCPPSPATERSYFHLFPPPPSPCTDSS. A PPPSP motif C motif is present at residues 1574–1581; it reads PPPPTPHS. A PPPSP motif D motif is present at residues 1591-1596; it reads PPSPAT. A compositionally biased stretch (pro residues) spans 1604-1615; sequence FPPPPSPCTDSS. The short motif at 1605 to 1612 is the PPPSP motif E element; it reads PPPPSPCT.

This sequence belongs to the LDLR family. Homodimer; disulfide-linked. Forms phosphorylated oligomer aggregates on Wnt-signaling. Component of a Wnt-signaling complex that contains a WNT protein, a FZD protein and LRP5 or LRP6. Interacts with FZD8; the interaction is formed on WNT-binding and signaling. Interacts (via the phosphorylated PPPSP motif domains) with AXIN1; the interaction prevents inhibition of beta-catenin phosphorylation and signaling and is enhanced in the presence of GSK3B and WNT1 or WNT3A. Interacts (via beta-propeller regions 3 and 4) with DKK1; the interaction, enhanced by MESD and/or KREMEN, inhibits beta-catenin signaling by preventing GSK3-mediated phosphorylation of the PPPSP motifs and subsequent, AXIN1 binding. Interacts with MESD; the interaction prevents the formation of LRP5 aggregates, targets LRP5 to the plasma membrane and, when complexed with KREMEN2, increases DKK1 binding. Interacts with CSNK1E. Interacts with SOST; the interaction antagonizes canonical Wnt signaling. Interacts with APCDD1. Interacts with CAPRIN2. Phosphorylation of cytoplasmic PPPSP motifs regulates the signal transduction of the Wnt signaling pathway through acting as a docking site for AXIN1. As to expression, widely expressed, with the highest level of expression in the liver and in aorta.

The protein resides in the membrane. The protein localises to the endoplasmic reticulum. Acts as a coreceptor with members of the frizzled family of seven-transmembrane spanning receptors to transduce signal by Wnt proteins. Activates the canonical Wnt signaling pathway that controls cell fate determination and self-renewal during embryonic development and adult tissue regeneration. In particular, may play an important role in the development of the posterior patterning of the epiblast during gastrulation. During bone development, regulates osteoblast proliferation and differentiation thus determining bone mass. Mechanistically, the formation of the signaling complex between Wnt ligand, frizzled receptor and LRP5 coreceptor promotes the recruitment of AXIN1 to LRP5, stabilizing beta-catenin/CTNNB1 and activating TCF/LEF-mediated transcriptional programs. Acts as a coreceptor for non-Wnt proteins, such as norrin/NDP. Binding of norrin/NDP to frizzled 4/FZD4-LRP5 receptor complex triggers beta-catenin/CTNNB1-dependent signaling known to be required for retinal vascular development. Plays a role in controlling postnatal vascular regression in retina via macrophage-induced endothelial cell apoptosis. The protein is Low-density lipoprotein receptor-related protein 5 of Homo sapiens (Human).